A 964-amino-acid chain; its full sequence is Iron-responsive element-binding protein 2 (964 aa).

[4Fe-4S] cluster contacts are provided by Cys-513, Cys-579, and Cys-582.

The protein belongs to the aconitase/IPM isomerase family. In terms of assembly, interacts with RBCK1 only in iron-rich conditions. Interacts (when associated with the 4Fe-4S) with FBXL5. Interacts with CIAO1 and CIAO2A. [4Fe-4S] cluster serves as cofactor. Ubiquitinated and degraded by the proteasome in presence of high level of iron and oxygen. Ubiquitinated by a SCF complex containing FBXL5. Upon iron and oxygen depletion FBXL5 is degraded, preventing ubiquitination and allowing its RNA-binding activity.

The protein resides in the cytoplasm. Functionally, RNA-binding protein that binds to iron-responsive elements (IRES), which are stem-loop structures found in the 5'-UTR of ferritin, and delta aminolevulinic acid synthase mRNAs, and in the 3'-UTR of transferrin receptor mRNA. Binding to the IRE element in ferritin results in the repression of its mRNA translation. Binding of the protein to the transferrin receptor mRNA inhibits the degradation of this otherwise rapidly degraded mRNA. The sequence is that of Iron-responsive element-binding protein 2 (IREB2) from Sus scrofa (Pig).